The following is a 255-amino-acid chain: tRNA (guanine-N(1)-)-methyltransferase (255 aa).

Residues Gly-113 and 133 to 138 (IGDYVL) contribute to the S-adenosyl-L-methionine site.

The protein belongs to the RNA methyltransferase TrmD family. As to quaternary structure, homodimer.

It localises to the cytoplasm. It catalyses the reaction guanosine(37) in tRNA + S-adenosyl-L-methionine = N(1)-methylguanosine(37) in tRNA + S-adenosyl-L-homocysteine + H(+). Its function is as follows. Specifically methylates guanosine-37 in various tRNAs. This Enterobacter sp. (strain 638) protein is tRNA (guanine-N(1)-)-methyltransferase.